The following is a 572-amino-acid chain: Proline--tRNA ligase (572 aa).

The protein belongs to the class-II aminoacyl-tRNA synthetase family. ProS type 1 subfamily. Homodimer.

It is found in the cytoplasm. It catalyses the reaction tRNA(Pro) + L-proline + ATP = L-prolyl-tRNA(Pro) + AMP + diphosphate. Functionally, catalyzes the attachment of proline to tRNA(Pro) in a two-step reaction: proline is first activated by ATP to form Pro-AMP and then transferred to the acceptor end of tRNA(Pro). As ProRS can inadvertently accommodate and process non-cognate amino acids such as alanine and cysteine, to avoid such errors it has two additional distinct editing activities against alanine. One activity is designated as 'pretransfer' editing and involves the tRNA(Pro)-independent hydrolysis of activated Ala-AMP. The other activity is designated 'posttransfer' editing and involves deacylation of mischarged Ala-tRNA(Pro). The misacylated Cys-tRNA(Pro) is not edited by ProRS. The chain is Proline--tRNA ligase from Escherichia coli O7:K1 (strain IAI39 / ExPEC).